A 2495-amino-acid chain; its full sequence is Non-reducing polyketide synthase adrD (2495 aa).

The interval 14–252 is N-terminal acylcarrier protein transacylase domain (SAT); that stretch reads VVFGPQSSEI…HHSRHVTAVQ (239 aa). Residues 386–807 enclose the Ketosynthase family 3 (KS3) domain; it reads VIPIAITGMG…GSNAALVVKQ (422 aa). Catalysis depends on for beta-ketoacyl synthase activity residues cysteine 551, histidine 686, and histidine 725. A malonyl-CoA:ACP transacylase (MAT) domain region spans residues 913–1222; the sequence is LCFGGQNGNE…QALDLGGALA (310 aa). Serine 1000 acts as the For acyl/malonyl transferase activity in catalysis. Residues 1294-1422 form an N-terminal hotdog fold region; sequence KEFVQLLTKQ…GEISLHPFGQ (129 aa). In terms of domain architecture, PKS/mFAS DH spans 1294 to 1601; sequence KEFVQLLTKQ…FTSVSIAGLS (308 aa). Residues 1295-1600 are product template (PT) domain; the sequence is EFVQLLTKQP…TFTSVSIAGL (306 aa). Histidine 1325 acts as the Proton acceptor; for dehydratase activity in catalysis. Residues 1450–1601 are C-terminal hotdog fold; that stretch reads ESSGLKGFAV…FTSVSIAGLS (152 aa). Aspartate 1508 (proton donor; for dehydratase activity) is an active-site residue. One can recognise a Carrier domain in the interval 1651–1725; sequence SGHFMVVQEM…TLVQTIFPDA (75 aa). Serine 1685 is subject to O-(pantetheine 4'-phosphoryl)serine. The tract at residues 1887–2120 is methyltransferase (CMeT) domain; that stretch reads QHTSEHNLLR…GFQWVDWTYN (234 aa). Residues 2150-2495 are thioesterase (TE) domain; it reads YLMNEETIVY…YEFLRDHVRY (346 aa). Residues serine 2273 and aspartate 2432 each act as for thioesterase activity in the active site.

It catalyses the reaction 3 malonyl-CoA + acetyl-CoA + 2 S-adenosyl-L-methionine = 3,5-dimethylorsellinate + 2 S-adenosyl-L-homocysteine + 3 CO2 + 4 CoA. It participates in secondary metabolite biosynthesis; terpenoid biosynthesis. Its function is as follows. Non-reducing polyketide synthase; part of the gene cluster that mediates the biosynthesis of andrastins, meroterpenoid compounds that exhibit inhibitory activity against ras farnesyltransferase, suggesting that they could be promising leads for antitumor agents. The first step of the pathway is the synthesis of 3,5-dimethylorsellinic acid (DMOA) by the polyketide synthase adrD via condensation of one acetyl-CoA starter unit with 3 malonyl-CoA units and 2 methylations. DMAO is then converted to farnesyl-DMAO by the prenyltransferase adrG. The methyltransferase adrK catalyzes the methylation of the carboxyl group of farnesyl-DMAO to farnesyl-DMAO methyl ester which is further converted to epoxyfarnesyl-DMAO methyl ester by the FAD-dependent monooxygenase adrH. The terpene cyclase adrI then catalyzes the carbon skeletal rearrangement to generate the andrastin E, the first compound in the pathway having the andrastin scaffold, with the tetracyclic ring system. The post-cyclization tailoring enzymes adrF, adrE, adrJ, and adrA, are involved in the conversion of andrastin E into andrastin A. The short chain dehydrogenase adrF is responsible for the oxidation of the C-3 a hydroxyl group of andrastin E to yield the corresponding ketone, andrastin D. The ketoreductase adrE stereoselectively reduces the carbonyl moiety to reverse the stereochemistry of the C-3 position to yield andrastin F. The acetyltransferase adrJ is the acetyltransferase that attaches the acetyl group to the C-3 hydroxyl group of andrastin F to yield andrastin C. Finally, the cytochrome P450 monooxygenase adrA catalyzes two sequential oxidation reactions of the C-23 methyl group, to generate the corresponding alcohol andrastin B, and aldehyde andrastin A. The protein is Non-reducing polyketide synthase adrD of Penicillium roqueforti.